The primary structure comprises 1076 residues: Hormone-sensitive lipase (1076 aa).

Polar residues-rich tracts occupy residues 1 to 12 (MEPGSKSVSRSD) and 38 to 64 (ESKT…QETP). Disordered stretches follow at residues 1 to 198 (MEPG…KSKQ) and 229 to 250 (VTDS…PATM). A compositionally biased stretch (basic and acidic residues) spans 65-77 (AQHDAESQKEPRA). Polar residues predominate over residues 94 to 116 (APQQSPYIQRVLLTQQEAASQQG). Positions 140 to 149 (GPGPGEPPPA) are enriched in pro residues. A compositionally biased stretch (low complexity) spans 150–161 (QQEAESTPAAQA). The span at 172-198 (PTESTSQETPEQSDKQTTPVQGAKSKQ) shows a compositional bias: polar residues. Low complexity predominate over residues 237–246 (DVGSSSDTDS). Residues 651–653 (HGG) carry the Involved in the stabilization of the negatively charged intermediate by the formation of the oxyanion hole motif. Ser-725 is a catalytic residue. The tract at residues 838 to 930 (KSQKMSEPIA…EAEAKNELSP (93 aa)) is disordered. Residue Ser-853 is modified to Phosphoserine. Ser-855 bears the Phosphoserine; by AMPK mark. Residues 882–908 (RGNSETSSDTPEMSLSAETLSPSTPSD) show a composition bias toward polar residues. A phosphoserine mark is found at Ser-897, Ser-929, Ser-950, and Ser-951. Residues Asp-994 and His-1024 contribute to the active site. The interval 1055–1076 (AGAGPSGETGAAGVDGGCGGRH) is disordered. Residues 1067-1076 (GVDGGCGGRH) show a composition bias toward gly residues.

This sequence belongs to the 'GDXG' lipolytic enzyme family. As to quaternary structure, monomer and homodimer. Interacts with CAVIN1 in the adipocyte cytoplasm. Interacts with PLIN5. In terms of processing, phosphorylation by AMPK reduces its translocation towards the lipid droplets. As to expression, testis.

It is found in the cell membrane. The protein resides in the membrane. Its subcellular location is the caveola. The protein localises to the cytoplasm. It localises to the cytosol. It is found in the lipid droplet. It carries out the reaction a diacylglycerol + H2O = a monoacylglycerol + a fatty acid + H(+). The catalysed reaction is a triacylglycerol + H2O = a diacylglycerol + a fatty acid + H(+). It catalyses the reaction a monoacylglycerol + H2O = glycerol + a fatty acid + H(+). The enzyme catalyses Hydrolyzes glycerol monoesters of long-chain fatty acids.. It carries out the reaction 1,2-di-(9Z-octadecenoyl)-glycerol + (9Z)-octadecenoate + H(+) = 1,2,3-tri-(9Z-octadecenoyl)-glycerol + H2O. The catalysed reaction is 2,3-di-(9Z)-octadecenoyl-sn-glycerol + H2O = 2-(9Z-octadecenoyl)-glycerol + (9Z)-octadecenoate + H(+). It catalyses the reaction cholesteryl (9Z-octadecenoate) + H2O = cholesterol + (9Z)-octadecenoate + H(+). The enzyme catalyses 1,2,3-tri-(9Z-octadecenoyl)-glycerol + H2O = di-(9Z)-octadecenoylglycerol + (9Z)-octadecenoate + H(+). It carries out the reaction all-trans-retinyl hexadecanoate + H2O = all-trans-retinol + hexadecanoate + H(+). The catalysed reaction is 1,2-di-(9Z-octadecenoyl)-glycerol + H2O = (9Z-octadecenoyl)-glycerol + (9Z)-octadecenoate + H(+). It catalyses the reaction 2-(5Z,8Z,11Z,14Z-eicosatetraenoyl)-glycerol + H2O = glycerol + (5Z,8Z,11Z,14Z)-eicosatetraenoate + H(+). The enzyme catalyses 1-(9Z-octadecenoyl)-glycerol + H2O = glycerol + (9Z)-octadecenoate + H(+). It carries out the reaction 2-(9Z-octadecenoyl)-glycerol + H2O = glycerol + (9Z)-octadecenoate + H(+). The catalysed reaction is 1-O-hexadecyl-2-acetyl-sn-glycerol + H2O = 1-O-hexadecyl-sn-glycerol + acetate + H(+). It catalyses the reaction 1,2-di-(9Z-octadecenoyl)-sn-glycerol + H2O = (9Z-octadecenoyl)-glycerol + (9Z)-octadecenoate + H(+). The enzyme catalyses 1,3-di-(9Z-octadecenoyl)-glycerol + H2O = 1-(9Z-octadecenoyl)-glycerol + (9Z)-octadecenoate + H(+). It carries out the reaction 1,2-di-(9Z-octadecenoyl)-glycerol + H2O = 2-(9Z-octadecenoyl)-glycerol + (9Z)-octadecenoate + H(+). It participates in glycerolipid metabolism; triacylglycerol degradation. Retinyl ester hydrolase is inhibited by bis-p-nitrophenyl phosphate. In terms of biological role, lipase with broad substrate specificity, catalyzing the hydrolysis of triacylglycerols (TAGs), diacylglycerols (DAGs), monoacylglycerols (MAGs), cholesteryl esters and retinyl esters. Shows a preferential hydrolysis of DAGs over TAGs and MAGs and preferentially hydrolyzes the fatty acid (FA) esters at the sn-3 position of the glycerol backbone in DAGs. Preferentially hydrolyzes FA esters at the sn-1 and sn-2 positions of the glycerol backbone in TAGs. Catalyzes the hydrolysis of 2-arachidonoylglycerol, an endocannabinoid and of 2-acetyl monoalkylglycerol ether, the penultimate precursor of the pathway for de novo synthesis of platelet-activating factor. In adipose tissue and heart, it primarily hydrolyzes stored triglycerides to free fatty acids, while in steroidogenic tissues, it principally converts cholesteryl esters to free cholesterol for steroid hormone production. In Homo sapiens (Human), this protein is Hormone-sensitive lipase (LIPE).